We begin with the raw amino-acid sequence, 154 residues long: Mating pheromone 2 (154 aa).

An N-terminal signal peptide occupies residues Met-1–Ala-16. A propeptide spanning residues Phe-17 to Lys-52 is cleaved from the precursor.

The protein resides in the secreted. In terms of biological role, mating ciliate pheromones (or gamones) are diffusible extracellular communication signals that distinguish different intraspecific classes of cells commonly referred to as 'mating types'. They prepare the latter for conjugation by changing their cell surface properties. The polypeptide is Mating pheromone 2 (Euplotoides octocarinatus (Freshwater ciliate)).